Here is a 487-residue protein sequence, read N- to C-terminus: Solute carrier family 22 member 15-like (487 aa).

Residues 22-42 (AFLTLLQVYVACQSMLIVLVG) form a helical membrane-spanning segment. An N-linked (GlcNAc...) asparagine glycan is attached at N70. The next 11 membrane-spanning stretches (helical) occupy residues 90 to 110 (LASSLFFAGLLIGNILFGPLS), 117 to 137 (PVYLSGLFFDITFGYCTALAP), 141 to 161 (VFAVSRFFVGIMNGGMALVSF), 178 to 198 (SLTNLIFAVGIAFYALLGFYI), 203 to 223 (TLAFVANSPGIFFFLLSFLLP), 286 to 306 (ILLMYIWYVCSLVYYGLTLNA), 315 to 335 (LNVALYGLVEVPAFPLCLYFI), 345 to 365 (ATAGFLGFAGFACIFTIFLPE), 374 to 394 (TVLALFGKLSVSAAFNVVYIY), 406 to 426 (AGLGVCAMACRFGGILSPFIP), and 435 to 455 (MPFVAFGISGISAGILSLLLP).

This sequence belongs to the major facilitator (TC 2.A.1) superfamily. Organic cation transporter (TC 2.A.1.19) family.

It localises to the membrane. Its function is as follows. Probably transports organic cations. The sequence is that of Solute carrier family 22 member 15-like (slc22a15b) from Xenopus tropicalis (Western clawed frog).